Here is a 522-residue protein sequence, read N- to C-terminus: Probable cytochrome P450 12e1, mitochondrial (522 aa).

A heme-binding site is contributed by Cys468.

It belongs to the cytochrome P450 family. Requires heme as cofactor.

The protein resides in the mitochondrion membrane. The sequence is that of Probable cytochrome P450 12e1, mitochondrial (Cyp12e1) from Drosophila melanogaster (Fruit fly).